The chain runs to 464 residues: tRNA modification GTPase MnmE (464 aa).

(6S)-5-formyl-5,6,7,8-tetrahydrofolate is bound by residues arginine 27, glutamate 89, and arginine 128. The TrmE-type G domain occupies 225 to 384 (GLATAIIGHP…LEDRIAAMFF (160 aa)). Asparagine 235 contacts K(+). GTP-binding positions include 235-240 (NVGKSS), 254-260 (TDVAGTT), and 279-282 (DTAG). Serine 239 is a Mg(2+) binding site. 3 residues coordinate K(+): threonine 254, valine 256, and threonine 259. Threonine 260 lines the Mg(2+) pocket. Residue lysine 464 coordinates (6S)-5-formyl-5,6,7,8-tetrahydrofolate.

This sequence belongs to the TRAFAC class TrmE-Era-EngA-EngB-Septin-like GTPase superfamily. TrmE GTPase family. In terms of assembly, homodimer. Heterotetramer of two MnmE and two MnmG subunits. It depends on K(+) as a cofactor.

It localises to the cytoplasm. Exhibits a very high intrinsic GTPase hydrolysis rate. Involved in the addition of a carboxymethylaminomethyl (cmnm) group at the wobble position (U34) of certain tRNAs, forming tRNA-cmnm(5)s(2)U34. This is tRNA modification GTPase MnmE from Pediococcus pentosaceus (strain ATCC 25745 / CCUG 21536 / LMG 10740 / 183-1w).